The sequence spans 330 residues: Ribosomal RNA small subunit methyltransferase C (330 aa).

The protein belongs to the methyltransferase superfamily. RsmC family. In terms of assembly, monomer.

The protein localises to the cytoplasm. It carries out the reaction guanosine(1207) in 16S rRNA + S-adenosyl-L-methionine = N(2)-methylguanosine(1207) in 16S rRNA + S-adenosyl-L-homocysteine + H(+). Functionally, specifically methylates the guanine in position 1207 of 16S rRNA in the 30S particle. This is Ribosomal RNA small subunit methyltransferase C from Haemophilus influenzae (strain PittEE).